The following is a 181-amino-acid chain: Cytochrome b6-f complex iron-sulfur subunit (181 aa).

Residues 1 to 35 (MAQTGNFKSPARMSSLGQGAAPASSGAVTGGKPRE) are disordered. Transmembrane regions (helical) follow at residues 53–73 (VGGVGAVVAVSTLYPVVKYII) and 114–134 (GGALTAVSAVCTHLGCLVNWV). In terms of domain architecture, Rieske spans 85–178 (LTVGKASEVP…ARIEGDSIII (94 aa)). Positions 124, 126, 142, and 145 each coordinate [2Fe-2S] cluster. Cysteines 129 and 144 form a disulfide.

This sequence belongs to the Rieske iron-sulfur protein family. The cofactor is [2Fe-2S] cluster.

It is found in the cell inner membrane. The enzyme catalyses 2 oxidized [plastocyanin] + a plastoquinol + 2 H(+)(in) = 2 reduced [plastocyanin] + a plastoquinone + 4 H(+)(out). Functionally, component of the green S-bacteria bc-complex which consists of the Rieske protein and cytochrome b subunit and which appears to lack a cytochrome c1-equivalent. This complex has a comparatively low redox potential. This chain is Cytochrome b6-f complex iron-sulfur subunit (petC), found in Chlorobaculum thiosulfatiphilum (Chlorobium limicola f.sp. thiosulfatophilum).